Here is a 271-residue protein sequence, read N- to C-terminus: Formamidopyrimidine-DNA glycosylase (271 aa).

Proline 2 serves as the catalytic Schiff-base intermediate with DNA. Residue glutamate 3 is the Proton donor of the active site. Catalysis depends on lysine 58, which acts as the Proton donor; for beta-elimination activity. DNA is bound by residues histidine 91, arginine 110, and arginine 152. An FPG-type zinc finger spans residues 237–271 (WVYGRTGQPCRKCGALVSKTRQGQRSSFFCAQCQK). Arginine 261 functions as the Proton donor; for delta-elimination activity in the catalytic mechanism.

Belongs to the FPG family. Monomer. Zn(2+) serves as cofactor.

The catalysed reaction is Hydrolysis of DNA containing ring-opened 7-methylguanine residues, releasing 2,6-diamino-4-hydroxy-5-(N-methyl)formamidopyrimidine.. It catalyses the reaction 2'-deoxyribonucleotide-(2'-deoxyribose 5'-phosphate)-2'-deoxyribonucleotide-DNA = a 3'-end 2'-deoxyribonucleotide-(2,3-dehydro-2,3-deoxyribose 5'-phosphate)-DNA + a 5'-end 5'-phospho-2'-deoxyribonucleoside-DNA + H(+). In terms of biological role, involved in base excision repair of DNA damaged by oxidation or by mutagenic agents. Acts as a DNA glycosylase that recognizes and removes damaged bases. Has a preference for oxidized purines, such as 7,8-dihydro-8-oxoguanine (8-oxoG). Has AP (apurinic/apyrimidinic) lyase activity and introduces nicks in the DNA strand. Cleaves the DNA backbone by beta-delta elimination to generate a single-strand break at the site of the removed base with both 3'- and 5'-phosphates. This chain is Formamidopyrimidine-DNA glycosylase, found in Nitrosomonas eutropha (strain DSM 101675 / C91 / Nm57).